The following is a 304-amino-acid chain: Nucleotide-binding protein KRH_12070 (304 aa).

27-34 (GMSGAGRS) is an ATP binding site. 78-81 (DVRG) contributes to the GTP binding site.

The protein belongs to the RapZ-like family.

In terms of biological role, displays ATPase and GTPase activities. This Kocuria rhizophila (strain ATCC 9341 / DSM 348 / NBRC 103217 / DC2201) protein is Nucleotide-binding protein KRH_12070.